Reading from the N-terminus, the 487-residue chain is MKVQKSSKKPLKRSASFTNGTKSGSKSMKSSKSSLKSHKKIYKEIFDSEISDNESFDSEISDSESSDNESSDNESSDNESSVESSDEESEYEIKKPRRIPSQYSKKFTDNVLDDESDDDNQSDNESSDINSDDDNNLNELKNNVIEVNKSLSKNIISNGDITDIRNIIYEKIDKEISKGIYGTFNVLIMIHNGYINVTKVIQYVTTKKKKFNDWKSTKQAQELIEEVSSVTGIPVAGLFIAKNTGSKKITEIRGTYAHPDLVPHIVSWASAKFGHKVSKIVNDYMSKKMFDKHEQLIKGKDDKIAELTRKIDKQTSLMKDQKSTIKEQDKKINELLSKSNEVLGYAKDTNRKITHVVKERVPYSDEPKIEHQLIIMKNNDEPIKPKKGEKAKKIYGYTALRIMNKSKSATMNRYYKDHPDGETVLTIDYTPNAMHLWNQCKMELIEDEKIRPGGTSCSSFNLRKEYSERKLKKDIKRIHNLRLKHPE.

Residues 1 to 12 (MKVQKSSKKPLK) show a composition bias toward basic residues. The tract at residues 1-137 (MKVQKSSKKP…DINSDDDNNL (137 aa)) is disordered. The span at 22–34 (KSGSKSMKSSKSS) shows a compositional bias: low complexity. 2 stretches are compositionally biased toward acidic residues: residues 47–77 (DSEISDNESFDSEISDSESSDNESSDNESSD) and 111–136 (VLDDESDDDNQSDNESSDINSDDDNN). Residues 175–284 (EISKGIYGTF…HKVSKIVNDY (110 aa)) form the KilA-N domain. A coiled-coil region spans residues 290–338 (FDKHEQLIKGKDDKIAELTRKIDKQTSLMKDQKSTIKEQDKKINELLSK).

The sequence is that of Putative KilA-N domain-containing protein L37 from Acanthamoeba polyphaga mimivirus (APMV).